A 350-amino-acid polypeptide reads, in one-letter code: Thymidine kinase (350 aa).

Residue glycine 15 to threonine 22 coordinates ATP. The active-site Proton acceptor is glutamate 44. Glutamine 88 provides a ligand contact to substrate. Arginine 178 lines the ATP pocket. Residue arginine 184 coordinates substrate.

This sequence belongs to the herpesviridae thymidine kinase family. As to quaternary structure, homodimer.

It carries out the reaction thymidine + ATP = dTMP + ADP + H(+). Functionally, catalyzes the transfer of the gamma-phospho group of ATP to thymidine to generate dTMP in the salvage pathway of pyrimidine synthesis. The dTMP serves as a substrate for DNA polymerase during viral DNA replication. Allows the virus to be reactivated and to grow in non-proliferative cells lacking a high concentration of phosphorylated nucleic acid precursors. In Bos taurus (Bovine), this protein is Thymidine kinase.